Reading from the N-terminus, the 253-residue chain is Dehydration-responsive element-binding protein 1D (253 aa).

The segment covering 1-22 has biased composition (polar residues); the sequence is MEKNTAASGQLMTSSAEATPSS. The disordered stretch occupies residues 1–31; the sequence is MEKNTAASGQLMTSSAEATPSSPKRPAGRTK. The AP2/ERF DNA-binding region spans 39–98; it reads VFRGVRWRGCAGRWVCKVRVPGSRGDRFWIGTSDTAEETARTHDAAMLALCGASASLNFA. The interval 131–153 is disordered; the sequence is RRVPAPGRGSTATATATSGDAAS. Residues 134 to 153 are compositionally biased toward low complexity; the sequence is PAPGRGSTATATATSGDAAS.

It belongs to the AP2/ERF transcription factor family. ERF subfamily.

The protein resides in the nucleus. Functionally, transcriptional activator that binds specifically to the DNA sequence 5'-[AG]CCGAC-3'. Binding to the C-repeat/DRE element mediates high salinity- and dehydration-inducible transcription. This chain is Dehydration-responsive element-binding protein 1D (DREB1D), found in Oryza sativa subsp. indica (Rice).